The primary structure comprises 360 residues: Photosystem II protein D1 1 (360 aa).

Helical transmembrane passes span 29-46, 118-133, and 142-156; these read YVGWFGVLMIPTLLTATT, HFLIGVFCYMGREWEL, and WICVAFSAPVAAATA. Residue H118 participates in chlorophyll a binding. Y126 serves as a coordination point for pheophytin a. [CaMn4O5] cluster contacts are provided by D170 and E189. The helical transmembrane segment at 197 to 218 threads the bilayer; the sequence is FHMLGVAGVFGGSLFSAMHGSL. H198 contributes to the chlorophyll a binding site. A quinone is bound by residues H215 and 264–265; that span reads SF. H215 is a binding site for Fe cation. Position 272 (H272) interacts with Fe cation. Residues 274 to 288 traverse the membrane as a helical segment; that stretch reads FLGAWPVVGIWFTAL. [CaMn4O5] cluster contacts are provided by H332, E333, D342, and A344. Positions 345-360 are excised as a propeptide; the sequence is AGEQAPVALQAPAING.

This sequence belongs to the reaction center PufL/M/PsbA/D family. PSII is composed of 1 copy each of membrane proteins PsbA, PsbB, PsbC, PsbD, PsbE, PsbF, PsbH, PsbI, PsbJ, PsbK, PsbL, PsbM, PsbT, PsbX, PsbY, PsbZ, Psb30/Ycf12, peripheral proteins PsbO, CyanoQ (PsbQ), PsbU, PsbV and a large number of cofactors. It forms dimeric complexes. The D1/D2 heterodimer binds P680, chlorophylls that are the primary electron donor of PSII, and subsequent electron acceptors. It shares a non-heme iron and each subunit binds pheophytin, quinone, additional chlorophylls, carotenoids and lipids. D1 provides most of the ligands for the Mn4-Ca-O5 cluster of the oxygen-evolving complex (OEC). There is also a Cl(-1) ion associated with D1 and D2, which is required for oxygen evolution. The PSII complex binds additional chlorophylls, carotenoids and specific lipids. is required as a cofactor. In terms of processing, tyr-161 forms a radical intermediate that is referred to as redox-active TyrZ, YZ or Y-Z. C-terminally processed by CtpA; processing is essential to allow assembly of the oxygen-evolving complex and thus photosynthetic growth.

It is found in the cellular thylakoid membrane. The catalysed reaction is 2 a plastoquinone + 4 hnu + 2 H2O = 2 a plastoquinol + O2. In terms of biological role, photosystem II (PSII) is a light-driven water:plastoquinone oxidoreductase that uses light energy to abstract electrons from H(2)O, generating O(2) and a proton gradient subsequently used for ATP formation. It consists of a core antenna complex that captures photons, and an electron transfer chain that converts photonic excitation into a charge separation. The D1/D2 (PsbA/PsbD) reaction center heterodimer binds P680, the primary electron donor of PSII as well as several subsequent electron acceptors. In Picosynechococcus sp. (strain ATCC 27264 / PCC 7002 / PR-6) (Agmenellum quadruplicatum), this protein is Photosystem II protein D1 1.